Consider the following 158-residue polypeptide: ATP synthase subunit b' (158 aa).

The chain crosses the membrane as a helical span at residues 24–44; sequence ATLPLMAVQILVLVFLLNAVF.

This sequence belongs to the ATPase B chain family. In terms of assembly, F-type ATPases have 2 components, F(1) - the catalytic core - and F(0) - the membrane proton channel. F(1) has five subunits: alpha(3), beta(3), gamma(1), delta(1), epsilon(1). F(0) has four main subunits: a(1), b(1), b'(1) and c(10-14). The alpha and beta chains form an alternating ring which encloses part of the gamma chain. F(1) is attached to F(0) by a central stalk formed by the gamma and epsilon chains, while a peripheral stalk is formed by the delta, b and b' chains.

It is found in the cellular thylakoid membrane. Functionally, f(1)F(0) ATP synthase produces ATP from ADP in the presence of a proton or sodium gradient. F-type ATPases consist of two structural domains, F(1) containing the extramembraneous catalytic core and F(0) containing the membrane proton channel, linked together by a central stalk and a peripheral stalk. During catalysis, ATP synthesis in the catalytic domain of F(1) is coupled via a rotary mechanism of the central stalk subunits to proton translocation. Its function is as follows. Component of the F(0) channel, it forms part of the peripheral stalk, linking F(1) to F(0). The b'-subunit is a diverged and duplicated form of b found in plants and photosynthetic bacteria. The sequence is that of ATP synthase subunit b' from Synechococcus elongatus (strain ATCC 33912 / PCC 7942 / FACHB-805) (Anacystis nidulans R2).